The following is a 394-amino-acid chain: Aromatic aminotransferase ISS1 (394 aa).

Gly2 bears the N-acetylglycine mark. Substrate is bound at residue Gly38. Residues Tyr64, 98 to 99 (AN), Tyr123, Asn176, Tyr207, and 230 to 232 (SFS) each bind pyridoxal 5'-phosphate. Positions 123 and 176 each coordinate substrate. At Lys233 the chain carries N6-(pyridoxal phosphate)lysine. Arg241 is a binding site for pyridoxal 5'-phosphate. 2 residues coordinate substrate: Arg362 and Arg374.

It belongs to the class-I pyridoxal-phosphate-dependent aminotransferase family. As to quaternary structure, homodimer. Requires pyridoxal 5'-phosphate as cofactor. In terms of tissue distribution, expressed in roots, cotyledons and flowers.

The protein resides in the cytoplasm. The enzyme catalyses a 2-oxocarboxylate + L-methionine = 4-methylsulfanyl-2-oxobutanoate + an L-alpha-amino acid. The catalysed reaction is L-tryptophan + 2-oxoglutarate = indole-3-pyruvate + L-glutamate. It catalyses the reaction L-tyrosine + 2-oxoglutarate = 3-(4-hydroxyphenyl)pyruvate + L-glutamate. Coordinates and prevents auxin (IAA) and ethylene biosynthesis, thus regulating auxin homeostasis in young seedlings. Shows aminotransferase activity with methionine; can use the ethylene biosynthetic intermediate L-methionine (L-Met) as an amino donor and the auxin biosynthetic intermediate, indole-3-pyruvic acid (3-IPA) as an amino acceptor to produce L-tryptophan (L-Trp) and 2-oxo-4-methylthiobutyric acid (KMBA). Can also use tryptophan (Trp), phenylalanine (Phe), and tyrosine (Tyr) as substrates. Regulates tryptophan (Trp) homeostasis and catabolism in mature plants. Also possibly involved in the metabolism of other aromatic amino acids and phenylpropanoid homeostasis. This chain is Aromatic aminotransferase ISS1, found in Arabidopsis thaliana (Mouse-ear cress).